The following is a 642-amino-acid chain: Threonine--tRNA ligase (642 aa).

Residues 1 to 61 enclose the TGS domain; it reads MPIITLPDGS…SEDANLEIIT (61 aa). Residues 243–534 are catalytic; it reads DHRKIGKALD…ITEEYAGFFP (292 aa). Positions 334, 385, and 511 each coordinate Zn(2+).

The protein belongs to the class-II aminoacyl-tRNA synthetase family. Homodimer. The cofactor is Zn(2+).

It localises to the cytoplasm. It catalyses the reaction tRNA(Thr) + L-threonine + ATP = L-threonyl-tRNA(Thr) + AMP + diphosphate + H(+). Its function is as follows. Catalyzes the attachment of threonine to tRNA(Thr) in a two-step reaction: L-threonine is first activated by ATP to form Thr-AMP and then transferred to the acceptor end of tRNA(Thr). Also edits incorrectly charged L-seryl-tRNA(Thr). The chain is Threonine--tRNA ligase from Histophilus somni (strain 129Pt) (Haemophilus somnus).